Here is a 95-residue protein sequence, read N- to C-terminus: Small ribosomal subunit protein uS17 (95 aa).

It belongs to the universal ribosomal protein uS17 family. Part of the 30S ribosomal subunit.

One of the primary rRNA binding proteins, it binds specifically to the 5'-end of 16S ribosomal RNA. The sequence is that of Small ribosomal subunit protein uS17 from Streptomyces coelicolor (strain ATCC BAA-471 / A3(2) / M145).